A 500-amino-acid chain; its full sequence is MVNASGDPVIEAAHIWSDTLTVLKHSASLSPREKGWLEGVVPEGVFGSTIVLCVDNNDTLQAIQGDLNDSLLQALRTVTGENMFPAFKVVPKTEPEPLSAAKPAQPYPSEISPTVAEFGKESYGAKPVAAPREPMPATESQFPVGQQKMNRDPETHLNKNFTFDSFVPGDSNRFARTVALAVAEGSGQDFNPLCIYGGSGLGKTHLLNAIGNYALVKDPGLKVRYVTSEEFTNEFIDALQNPNQSQGQIAEFNRRYRQVDVLLIDDIQFLGGKEATLDQFFHTFNALHQANKRIVIASDVAPKNLKGFEARLISRFESGLTVDVKPPDLETRIAILRMIASMNGSKIPSDVLDLIAERFTENIRELEGALTRVTAVASLSNQPVTRALAEQTLQDFFTTDVEIKPTDIISQVAKYFHLTFEDLVGKSRTKNVAVPRQIAMYLAREMTSMSLMDIGQVFGGRDHTTVMHACTRISDRMQQKQEIYNYVMELTVRLKQSNTN.

Residues 1-81 (MVNASGDPVI…LQALRTVTGE (81 aa)) form a domain I, interacts with DnaA modulators region. The interval 81–155 (ENMFPAFKVV…QQKMNRDPET (75 aa)) is domain II. The tract at residues 156–377 (HLNKNFTFDS…GALTRVTAVA (222 aa)) is domain III, AAA+ region. ATP contacts are provided by Gly200, Gly202, Lys203, and Thr204. Positions 378 to 500 (SLSNQPVTRA…TVRLKQSNTN (123 aa)) are domain IV, binds dsDNA.

It belongs to the DnaA family. As to quaternary structure, oligomerizes as a right-handed, spiral filament on DNA at oriC.

Its subcellular location is the cytoplasm. Functionally, plays an essential role in the initiation and regulation of chromosomal replication. ATP-DnaA binds to the origin of replication (oriC) to initiate formation of the DNA replication initiation complex once per cell cycle. Binds the DnaA box (a 9 base pair repeat at the origin) and separates the double-stranded (ds)DNA. Forms a right-handed helical filament on oriC DNA; dsDNA binds to the exterior of the filament while single-stranded (ss)DNA is stabiized in the filament's interior. The ATP-DnaA-oriC complex binds and stabilizes one strand of the AT-rich DNA unwinding element (DUE), permitting loading of DNA polymerase. After initiation quickly degrades to an ADP-DnaA complex that is not apt for DNA replication. Binds acidic phospholipids. The chain is Chromosomal replication initiator protein DnaA from Bifidobacterium longum subsp. infantis (strain ATCC 15697 / DSM 20088 / JCM 1222 / NCTC 11817 / S12).